The following is a 404-amino-acid chain: Keratin, type I microfibrillar, 47.6 kDa (404 aa).

The head stretch occupies residues 1 to 56 (MSFNFCLPNLSFRSSCSSRPCVPSSCCGTTLPGACNIPASVGSCNWFCEGSFNGNE). The 312-residue stretch at 56-367 (EKETMQFLND…GLLDSEDCKL (312 aa)) folds into the IF rod domain. The coil 1A stretch occupies residues 57–91 (KETMQFLNDRLASYLEKVRQLERENAELERRILER). Residues 92-102 (SQQQEPLVCPN) are linker 1. Residues 103–203 (YQSYFRTIEE…HEQEVNTLRS (101 aa)) are coil 1B. The segment at 204-219 (QLGDRLNVEVDAAPTV) is linker 12. The interval 220–363 (DLNHVLNETR…NTYRGLLDSE (144 aa)) is coil 2. Positions 364–404 (DCKLPCNPCATTNTCGKPIGPCISNPCVSRTRCGPCNTFVH) are tail.

This sequence belongs to the intermediate filament family.

In terms of biological role, wool microfibrillar keratin. This is Keratin, type I microfibrillar, 47.6 kDa from Ovis aries (Sheep).